Here is a 320-residue protein sequence, read N- to C-terminus: tRNA dimethylallyltransferase (320 aa).

14-21 (GPTASGKT) contacts ATP. Residue 16–21 (TASGKT) participates in substrate binding. Interaction with substrate tRNA stretches follow at residues 39-42 (DSAL) and 163-167 (QRLQR).

Belongs to the IPP transferase family. In terms of assembly, monomer. Requires Mg(2+) as cofactor.

It carries out the reaction adenosine(37) in tRNA + dimethylallyl diphosphate = N(6)-dimethylallyladenosine(37) in tRNA + diphosphate. In terms of biological role, catalyzes the transfer of a dimethylallyl group onto the adenine at position 37 in tRNAs that read codons beginning with uridine, leading to the formation of N6-(dimethylallyl)adenosine (i(6)A). The sequence is that of tRNA dimethylallyltransferase from Thioalkalivibrio sulfidiphilus (strain HL-EbGR7).